The sequence spans 422 residues: Acetyl-CoA acetyltransferase, mitochondrial (422 aa).

Residues 1–28 (MPVLAALLRRGPLLQRRVQEIRYAERSY) constitute a mitochondrion transit peptide. N6-acetyllysine; alternate is present on Lys61. An N6-succinyllysine; alternate modification is found at Lys61. Lys73 is subject to N6-succinyllysine. The active-site Acyl-thioester intermediate is Cys121. An N6-acetyllysine; alternate mark is found at Lys169, Lys176, Lys185, and Lys197. Residues Lys169, Lys176, Lys185, and Lys197 each carry the N6-succinyllysine; alternate modification. Position 214 (Tyr214) interacts with CoA. Tyr214 provides a ligand contact to K(+). At Lys218 the chain carries N6-acetyllysine; alternate. Position 218 is an N6-succinyllysine; alternate (Lys218). The residue at position 238 (Lys238) is an N6-succinyllysine. N6-acetyllysine; alternate is present on Lys240. Lys240 is modified (N6-succinyllysine; alternate). Residues Lys246 and Lys252 each carry the N6-acetyllysine modification. Residues 253 to 255 (RVD) and Lys258 contribute to the CoA site. Lys258 carries the N6-acetyllysine; alternate modification. Lys258 bears the N6-succinyllysine; alternate mark. An N6-succinyllysine mark is found at Lys261 and Lys263. Positions 275, 276, and 278 each coordinate K(+). Ser279 lines the CoA pocket. The residue at position 333 (Lys333) is an N6-acetyllysine. Val376 lines the K(+) pocket. Cys408 functions as the Proton donor/acceptor in the catalytic mechanism.

This sequence belongs to the thiolase-like superfamily. Thiolase family. Homotetramer. Succinylation at Lys-263, adjacent to a coenzyme A binding site. Desuccinylated by SIRT5.

It is found in the mitochondrion. It carries out the reaction 2 acetyl-CoA = acetoacetyl-CoA + CoA. The enzyme catalyses propanoyl-CoA + acetyl-CoA = 2-methyl-3-oxobutanoyl-CoA + CoA. It participates in lipid metabolism; fatty acid beta-oxidation. With respect to regulation, activated by potassium ions, but not sodium ions. Functionally, this is one of the enzymes that catalyzes the last step of the mitochondrial beta-oxidation pathway, an aerobic process breaking down fatty acids into acetyl-CoA. Using free coenzyme A/CoA, catalyzes the thiolytic cleavage of medium- to long-chain 3-oxoacyl-CoAs into acetyl-CoA and a fatty acyl-CoA shortened by two carbon atoms. The activity of the enzyme is reversible and it can also catalyze the condensation of two acetyl-CoA molecules into acetoacetyl-CoA. Thereby, it plays a major role in ketone body metabolism. The polypeptide is Acetyl-CoA acetyltransferase, mitochondrial (ACAT1) (Bos taurus (Bovine)).